A 362-amino-acid chain; its full sequence is MTAELDLVSITQAPKALLHDHLDGGLRPGTVLDLARETGYENLPAQDETALASWFRTAADSGSLEQYLETFAHTVGVMQTASALHRVAAECVEDLAADGVVYAEVRFAPELHIDAGLTLDDVMDAVLAGFADGERQASAAGKRIKVRTLVTAMRHAARSREIAELAVKFRDRGAVGFDIAGAEAGYPPTRHLDAFEYMRNANSRFTIHAGEGFGLPSIHEAIAFCGADRLGHGVRIVDDIDIGPDGTAHLGRLSSLLRDKRVPLELCPSSNVQTGAVESLADHPFDLLARLRFRVTVNTDNRLMSDTTMSREMLRLVETFGYGWSDLQRFTINAMKSAFIPFDERLAIIDDVIKPGYAVLIG.

Histidine 19 and histidine 21 together coordinate Zn(2+). Substrate contacts are provided by histidine 21, aspartate 23, and glycine 181. Position 208 (histidine 208) interacts with Zn(2+). Catalysis depends on glutamate 211, which acts as the Proton donor. Aspartate 300 serves as a coordination point for Zn(2+).

This sequence belongs to the metallo-dependent hydrolases superfamily. Adenosine and AMP deaminases family. Adenosine deaminase subfamily. The cofactor is Zn(2+).

It carries out the reaction adenosine + H2O + H(+) = inosine + NH4(+). The catalysed reaction is 2'-deoxyadenosine + H2O + H(+) = 2'-deoxyinosine + NH4(+). Functionally, catalyzes the hydrolytic deamination of adenosine and 2-deoxyadenosine. The sequence is that of Adenosine deaminase from Mycobacteroides abscessus (strain ATCC 19977 / DSM 44196 / CCUG 20993 / CIP 104536 / JCM 13569 / NCTC 13031 / TMC 1543 / L948) (Mycobacterium abscessus).